The chain runs to 578 residues: ATP-dependent RNA helicase CHR1 (578 aa).

The tract at residues Met-1–Ile-95 is disordered. Basic and acidic residues-rich tracts occupy residues Glu-44–His-53 and Asn-78–Glu-94. Positions Asp-131–Cys-159 match the Q motif motif. The 178-residue stretch at Ile-162–Ile-339 folds into the Helicase ATP-binding domain. Ala-175–Thr-182 provides a ligand contact to ATP. The DEAD box motif lies at Asp-286–Asp-289. The 165-residue stretch at Thr-350–Gly-514 folds into the Helicase C-terminal domain. 2 stretches are compositionally biased toward basic and acidic residues: residues Ser-517–Arg-531 and Glu-561–Glu-578. A disordered region spans residues Ser-517–Glu-578.

The protein belongs to the DEAD box helicase family. DDX52/ROK1 subfamily. In terms of assembly, interacts with the U3 snoRNA and is associated with the 90S and 40S pre-ribosomes.

It is found in the nucleus. It localises to the nucleolus. It catalyses the reaction ATP + H2O = ADP + phosphate + H(+). ATP-dependent RNA helicase involved in 40S ribosomal subunit biogenesis. Required for the processing and cleavage of 35S pre-rRNA at sites A0, A1, and A2, leading to mature 18S rRNA. In Candida albicans (strain SC5314 / ATCC MYA-2876) (Yeast), this protein is ATP-dependent RNA helicase CHR1 (CHR1).